Reading from the N-terminus, the 98-residue chain is NADH-ubiquinone oxidoreductase chain 4L (98 aa).

Transmembrane regions (helical) follow at residues 1-21 (MPVVYVNIFLAFIVSLVGLLI), 29-49 (SLLCLEGMMLSLFVMLTVTVL), and 61-81 (IILLVFAACEAALGLSLLVMV).

It belongs to the complex I subunit 4L family. As to quaternary structure, core subunit of respiratory chain NADH dehydrogenase (Complex I) which is composed of 45 different subunits.

It localises to the mitochondrion inner membrane. The enzyme catalyses a ubiquinone + NADH + 5 H(+)(in) = a ubiquinol + NAD(+) + 4 H(+)(out). Core subunit of the mitochondrial membrane respiratory chain NADH dehydrogenase (Complex I) which catalyzes electron transfer from NADH through the respiratory chain, using ubiquinone as an electron acceptor. Part of the enzyme membrane arm which is embedded in the lipid bilayer and involved in proton translocation. The sequence is that of NADH-ubiquinone oxidoreductase chain 4L (MT-ND4L) from Ursus maritimus (Polar bear).